A 239-amino-acid chain; its full sequence is LexA repressor (239 aa).

The H-T-H motif DNA-binding region spans 26 to 46 (FDEMKDALDLKSKSGIHRLIT). Catalysis depends on for autocatalytic cleavage activity residues S160 and K198.

The protein belongs to the peptidase S24 family. Homodimer.

The enzyme catalyses Hydrolysis of Ala-|-Gly bond in repressor LexA.. Represses a number of genes involved in the response to DNA damage (SOS response), including recA and lexA. In the presence of single-stranded DNA, RecA interacts with LexA causing an autocatalytic cleavage which disrupts the DNA-binding part of LexA, leading to derepression of the SOS regulon and eventually DNA repair. In Methylobacterium sp. (strain 4-46), this protein is LexA repressor.